Consider the following 359-residue polypeptide: Tropomodulin-1 (359 aa).

The disordered stretch occupies residues 36-61; it reads ELDPDNALLPAGLRQKDQTTKAPTGP. The segment at 39–138 is tropomyosin-binding; that stretch reads PDNALLPAGL…CDIAAILGMH (100 aa).

It belongs to the tropomodulin family. As to quaternary structure, binds to the N-terminus of tropomyosin and to actin. Interacts with FLII. As to expression, highly expressed in the erythrocyte, heart and skeletal muscle.

The protein resides in the cytoplasm. Its subcellular location is the cytoskeleton. Functionally, blocks the elongation and depolymerization of the actin filaments at the pointed end. The Tmod/TM complex contributes to the formation of the short actin protofilament, which in turn defines the geometry of the membrane skeleton. May play an important role in regulating the organization of actin filaments by preferentially binding to a specific tropomyosin isoform at its N-terminus. The protein is Tropomodulin-1 (TMOD1) of Homo sapiens (Human).